Reading from the N-terminus, the 230-residue chain is Ribonuclease 3 (230 aa).

The RNase III domain occupies 5-134 (EALLKSSFAI…FLGALLLDKG (130 aa)). E47 is a binding site for Mg(2+). D51 is an active-site residue. D120 and E123 together coordinate Mg(2+). E123 is a catalytic residue. Residues 160-229 (DYKTSLQEIL…AENALKALSE (70 aa)) form the DRBM domain.

Belongs to the ribonuclease III family. In terms of assembly, homodimer. Mg(2+) serves as cofactor.

It localises to the cytoplasm. It carries out the reaction Endonucleolytic cleavage to 5'-phosphomonoester.. In terms of biological role, digests double-stranded RNA. Involved in the processing of primary rRNA transcript to yield the immediate precursors to the large and small rRNAs (23S and 16S). Processes some mRNAs, and tRNAs when they are encoded in the rRNA operon. Processes pre-crRNA and tracrRNA of type II CRISPR loci if present in the organism. The protein is Ribonuclease 3 of Streptococcus uberis (strain ATCC BAA-854 / 0140J).